Reading from the N-terminus, the 257-residue chain is Ribosomal RNA small subunit methyltransferase J (257 aa).

S-adenosyl-L-methionine-binding positions include 107–108, 123–124, and Asp177; these read RD and ER.

The protein belongs to the methyltransferase superfamily. RsmJ family.

It localises to the cytoplasm. It catalyses the reaction guanosine(1516) in 16S rRNA + S-adenosyl-L-methionine = N(2)-methylguanosine(1516) in 16S rRNA + S-adenosyl-L-homocysteine + H(+). Its function is as follows. Specifically methylates the guanosine in position 1516 of 16S rRNA. This chain is Ribosomal RNA small subunit methyltransferase J, found in Haemophilus influenzae (strain 86-028NP).